We begin with the raw amino-acid sequence, 115 residues long: U3-lycotoxin-Ls1p (115 aa).

The N-terminal stretch at 1 to 20 (MKFVLLFGVLLVTLFSYSSA) is a signal peptide. The propeptide occupies 21-44 (EMFDDFDQADEDELLSLIEKEEAR). 4 disulfide bridges follow: Cys48/Cys63, Cys55/Cys72, Cys62/Cys87, and Cys74/Cys85.

Belongs to the neurotoxin 19 (CSTX) family. 01 subfamily. As to expression, expressed by the venom gland.

The protein localises to the secreted. This Lycosa singoriensis (Wolf spider) protein is U3-lycotoxin-Ls1p.